A 516-amino-acid polypeptide reads, in one-letter code: Membrane-bound transcription factor site-2 protease (516 aa).

At Met1–Pro3 the chain is on the cytoplasmic side. Residues Val4–Leu24 traverse the membrane as a helical segment. Residues Lys25–Gln74 lie on the Lumenal side of the membrane. 2 consecutive transmembrane segments (helical) span residues Trp75–Gly95 and Lys96–Ala107. Residues Asp108–Gln141 are Lumenal-facing. The chain crosses the membrane as a helical span at residues Val142–Val166. His168 provides a ligand contact to Zn(2+). The active site involves Glu169. The next 3 membrane-spanning stretches (helical) occupy residues Gly171–Phe183, Asn184–Leu206, and Phe226–Tyr248. Position 172 (His172) interacts with Zn(2+). Over Thr249–Lys443 the chain is Lumenal. Residue Asn334 is glycosylated (N-linked (GlcNAc...) asparagine). 2 helical membrane passes run Tyr444–Phe461 and Ala462–Leu473. The Lumenal segment spans residues Asp474 to Leu489. Residues Ile490–Leu510 form a helical membrane-spanning segment. The Cytoplasmic portion of the chain corresponds to Trp511–Arg516.

The protein belongs to the peptidase M50A family. Zn(2+) serves as cofactor.

The protein resides in the membrane. It is found in the cytoplasm. Its subcellular location is the golgi apparatus membrane. It carries out the reaction Cleaves several transcription factors that are type-2 transmembrane proteins within membrane-spanning domains. Known substrates include sterol regulatory element-binding protein (SREBP) -1, SREBP-2 and forms of the transcriptional activator ATF6. SREBP-2 is cleaved at the site 477-DRSRILL-|-CVLTFLCLSFNPLTSLLQWGGA-505. The residues Asn-Pro, 11 residues distal to the site of cleavage in the membrane-spanning domain, are important for cleavage by S2P endopeptidase. Replacement of either of these residues does not prevent cleavage, but there is no cleavage if both of these residues are replaced.. Zinc metalloprotease that mediates intramembrane proteolysis of proteins such as ATF6, ATF6B, SREBF1/SREBP1 and SREBF2/SREBP2. Catalyzes the second step in the proteolytic activation of the sterol regulatory element-binding proteins (SREBPs) SREBF1/SREBP1 and SREBF2/SREBP2: cleaves SREBPs within the first transmembrane segment, thereby releasing the N-terminal segment with a portion of the transmembrane segment attached. Mature N-terminal SREBP fragments shuttle to the nucleus and activate gene transcription. Also mediates the second step in the proteolytic activation of the cyclic AMP-dependent transcription factor ATF-6 (ATF6 and ATF6B). Involved in intramembrane proteolysis during bone formation. In astrocytes and osteoblasts, upon DNA damage and ER stress, mediates the second step of the regulated intramembrane proteolytic activation of the transcription factor CREB3L1, leading to the inhibition of cell-cycle progression. The protein is Membrane-bound transcription factor site-2 protease of Bos taurus (Bovine).